A 254-amino-acid polypeptide reads, in one-letter code: MNRRRRIYEGKAKILYEGPEPGTLVQFFKDDATAFNAKKHEVIDGKGVLNNRISEHIFTQLNRIGIPTHFIRRLNMREQLIKEVEIIPLEVVVRNVAAGSLAKRLGLEEGTVLPRSIIEFYYKADALDDPMVTEEHITAFGWASPPEIDDIMALAIRVNDFLTGLFLGIGIQLVDFKMECGRLWEGDMMRIVVADEISPDSARLWDITTNDKLDKDRFRRDMGGLVEAYQEVARRLGIMNENDTPRPAGPTLVK.

It belongs to the SAICAR synthetase family.

The enzyme catalyses 5-amino-1-(5-phospho-D-ribosyl)imidazole-4-carboxylate + L-aspartate + ATP = (2S)-2-[5-amino-1-(5-phospho-beta-D-ribosyl)imidazole-4-carboxamido]succinate + ADP + phosphate + 2 H(+). Its pathway is purine metabolism; IMP biosynthesis via de novo pathway; 5-amino-1-(5-phospho-D-ribosyl)imidazole-4-carboxamide from 5-amino-1-(5-phospho-D-ribosyl)imidazole-4-carboxylate: step 1/2. The chain is Phosphoribosylaminoimidazole-succinocarboxamide synthase from Brucella anthropi (strain ATCC 49188 / DSM 6882 / CCUG 24695 / JCM 21032 / LMG 3331 / NBRC 15819 / NCTC 12168 / Alc 37) (Ochrobactrum anthropi).